A 139-amino-acid chain; its full sequence is MKKTTILNAQLSHVIATMGHTDGLTICDAGLPIPTEQHCIDLALTKGIPDFLSVLQAVSSELFIEKIVLAEEIKNINPQIEQQLLMVIQQIEVQQKNTIKIEYIPHNEFKHQSNQAKAVVRTGECSPYANVILYSGVPF.

The active-site Proton donor is the H20. Substrate is bound by residues D28, H106, and 128 to 130 (YAN).

It belongs to the RbsD / FucU family. RbsD subfamily. In terms of assembly, homodecamer.

The protein localises to the cytoplasm. It carries out the reaction beta-D-ribopyranose = beta-D-ribofuranose. Its pathway is carbohydrate metabolism; D-ribose degradation; D-ribose 5-phosphate from beta-D-ribopyranose: step 1/2. Functionally, catalyzes the interconversion of beta-pyran and beta-furan forms of D-ribose. The sequence is that of D-ribose pyranase from Glaesserella parasuis serovar 5 (strain SH0165) (Haemophilus parasuis).